The following is a 368-amino-acid chain: Ferrochelatase (368 aa).

Fe cation-binding residues include H209 and E290. The disordered stretch occupies residues 347-368; that stretch reads REEQEQQAHISREEARRLGADQ.

The protein belongs to the ferrochelatase family.

It is found in the cytoplasm. The enzyme catalyses heme b + 2 H(+) = protoporphyrin IX + Fe(2+). The protein operates within porphyrin-containing compound metabolism; protoheme biosynthesis; protoheme from protoporphyrin-IX: step 1/1. Functionally, catalyzes the ferrous insertion into protoporphyrin IX. This is Ferrochelatase from Janthinobacterium sp. (strain Marseille) (Minibacterium massiliensis).